The following is a 176-amino-acid chain: Probable chemoreceptor glutamine deamidase CheD (176 aa).

The protein belongs to the CheD family.

It carries out the reaction L-glutaminyl-[protein] + H2O = L-glutamyl-[protein] + NH4(+). In terms of biological role, probably deamidates glutamine residues to glutamate on methyl-accepting chemotaxis receptors (MCPs), playing an important role in chemotaxis. In Rhodospirillum rubrum (strain ATCC 11170 / ATH 1.1.1 / DSM 467 / LMG 4362 / NCIMB 8255 / S1), this protein is Probable chemoreceptor glutamine deamidase CheD.